Consider the following 557-residue polypeptide: Dihydroxy-acid dehydratase (557 aa).

Aspartate 78 is a binding site for Mg(2+). Residue cysteine 119 coordinates [2Fe-2S] cluster. Aspartate 120 and lysine 121 together coordinate Mg(2+). Position 121 is an N6-carboxylysine (lysine 121). Position 192 (cysteine 192) interacts with [2Fe-2S] cluster. Glutamate 442 lines the Mg(2+) pocket. Serine 468 functions as the Proton acceptor in the catalytic mechanism.

This sequence belongs to the IlvD/Edd family. As to quaternary structure, homodimer. It depends on [2Fe-2S] cluster as a cofactor. Requires Mg(2+) as cofactor.

The enzyme catalyses (2R)-2,3-dihydroxy-3-methylbutanoate = 3-methyl-2-oxobutanoate + H2O. It catalyses the reaction (2R,3R)-2,3-dihydroxy-3-methylpentanoate = (S)-3-methyl-2-oxopentanoate + H2O. It functions in the pathway amino-acid biosynthesis; L-isoleucine biosynthesis; L-isoleucine from 2-oxobutanoate: step 3/4. Its pathway is amino-acid biosynthesis; L-valine biosynthesis; L-valine from pyruvate: step 3/4. Functionally, functions in the biosynthesis of branched-chain amino acids. Catalyzes the dehydration of (2R,3R)-2,3-dihydroxy-3-methylpentanoate (2,3-dihydroxy-3-methylvalerate) into 2-oxo-3-methylpentanoate (2-oxo-3-methylvalerate) and of (2R)-2,3-dihydroxy-3-methylbutanoate (2,3-dihydroxyisovalerate) into 2-oxo-3-methylbutanoate (2-oxoisovalerate), the penultimate precursor to L-isoleucine and L-valine, respectively. The sequence is that of Dihydroxy-acid dehydratase from Bacillus cereus (strain G9842).